The chain runs to 815 residues: DNA topoisomerase 1 (815 aa).

The 117-residue stretch at 3–119 (KHLLIVESPA…QRIVFTEITP (117 aa)) folds into the Toprim domain. Positions 9 and 82 each coordinate Mg(2+). Residues 133-573 (ASDLVDAQQA…KFWVPFKELV (441 aa)) form the Topo IA-type catalytic domain. An interaction with DNA region spans residues 167-172 (SAGRVQ). Y308 (O-(5'-phospho-DNA)-tyrosine intermediate) is an active-site residue. The disordered stretch occupies residues 760–815 (GKPARKNFSTKKTATKNETRKQTTKKRTTDAKATKKVSDKPVKKQIKKRIAPNITE). The segment covering 774–801 (TKNETRKQTTKKRTTDAKATKKVSDKPV) has biased composition (basic and acidic residues).

Belongs to the type IA topoisomerase family. As to quaternary structure, monomer. Requires Mg(2+) as cofactor.

The catalysed reaction is ATP-independent breakage of single-stranded DNA, followed by passage and rejoining.. Functionally, releases the supercoiling and torsional tension of DNA, which is introduced during the DNA replication and transcription, by transiently cleaving and rejoining one strand of the DNA duplex. Introduces a single-strand break via transesterification at a target site in duplex DNA. The scissile phosphodiester is attacked by the catalytic tyrosine of the enzyme, resulting in the formation of a DNA-(5'-phosphotyrosyl)-enzyme intermediate and the expulsion of a 3'-OH DNA strand. The free DNA strand then undergoes passage around the unbroken strand, thus removing DNA supercoils. Finally, in the religation step, the DNA 3'-OH attacks the covalent intermediate to expel the active-site tyrosine and restore the DNA phosphodiester backbone. The chain is DNA topoisomerase 1 from Xylella fastidiosa (strain 9a5c).